The sequence spans 8525 residues: Nebulin (8525 aa).

The interval 34–70 (TTTTRTSDYEQSETSKPALAQPALAQPASAKPVERRK) is disordered. Residues 48-64 (SKPALAQPALAQPASAK) are compositionally biased toward low complexity. 235 Nebulin repeats span residues 83–110 (TPYIAHSQKMQDLFSPNKYKEKFEKTKG), 112–146 (PYASTTDTPELRRIKKVQDQLSEVKYRMDGDVAKT), 156–181 (DIEHAKKVSQQVSKVLYKQNWEDTKD), 182–216 (KYLLPPDAPELVQAVKNTAMFSKKLYTEDWEADKS), 217–251 (LFYPYNDSPELRRVAQAQKALSDVAYKKGLAEQQA), 252–286 (QFTPLADPPDIEFAKKVTNQVSKQKYKEDYENKIK), 296–321 (EVANARMNADNISTRKYQEDFENMKD), 323–357 (IYFMQTETPEYKMNKKAGVAASKVKYKEDYEKNKG), 362–396 (NVLPASENPQLRQLKAAGDALSDKLYKENYEKTKA), 403–431 (ETPKFKLDTVLQNFSSDKKYKDSYLKDIL), 433–467 (HYVGSFEDPYHSHCMKVTAQNSDKNYKAEYEEDRG), 501–535 (KFTQVTDSPVLLQAQVNSKQLSDLNYKAKHESEKF), 536–570 (KCHIPPDTPAFIQHKVNAYNLSDNLYKQDWEKSKA), 572–606 (KFDIKVDAIPLLAAKANTKNTSDVMYKKDYEKNKG), 610–644 (GVLSINDDPKMLHSLKVAKNQSDRLYKENYEKTKA), 680–714 (HYVGSMEDPYHTHCMKVAAQNSDKSYKAEYEEDKG), 748–782 (KFTAVTDSPVLLQAQLNTKQLSDLNYKAKHEGEKF), 783–817 (KCHIPADAPQFIQHRVNAYNLSDNVYKQDWEKSKA), 819–853 (KFDIKVDAIPLLAAKANTKNTSDVMYKKDYEKSKG), 857–891 (GALSINDDPKMLHSLKTAKNQSDREYRKDYEKSKT), 892–918 (IYTAPLDMLQVTQAKKSQAIASDVDYK), 923–957 (SYSYPPDSINVDLAKKAYALQSDVEYKADYNSWMK), 968–986 (EMEKAKRASDILNEKKYRQ), 992–1026 (KFTSIEDAPITVQSKINQAQRSDIAYKAKGEEIIH), 1027–1061 (KYNLPPDLPQFIQAKVNAYNISENMYKADLKDLSK), 1063–1097 (GYDLRTDAIPIRAAKAARQAASDVQYKKDYEKAKG), 1101–1135 (GFQSLQDDPKLVHYMNVAKIQSDREYKKDYEKTKS), 1136–1166 (KYNTPHDMFNVVAAKKAQDVVSNVNYKHSLH), 1167–1201 (HYTYLPDAMDLELSKNMMQIQSDNVYKEDYNNWMK), 1212–1230 (DVEKVKKAGDALNEKKYRQ), 1236–1270 (KFTSIVDSPVMVQAKQNTKQVSDILYKAKGEDVKH), 1271–1305 (KYTMSPDLPQFLQAKCNAYNISDVCYKRDWYDLIA), 1307–1341 (GNNVLGDAIPITAAKASRNIASDYKYKEAYEKSKG), 1345–1379 (GFRSLQDDPKLVHYMNVAKLQSDREYKKNYENTKT), 1380–1407 (SYHTPGDMVSITAAKMAQDVATNVNYKQ), 1411–1445 (HYTYLPDAMSLEHTRNVNQIQSDNVYKDEYNSFLK), 1456–1474 (EVEKVKKAGDALNERKYRQ), 1480–1514 (KFTSVPDSMGMVLAQHNTKQLSDLNYKVEGEKLKH), 1515–1549 (KYTIDPELPQFIQAKVNALNMSDAHYKADWKKTIA), 1551–1585 (GYDLRPDAIPIVAAKSSRNIASDCKYKEAYEKAKG), 1589–1623 (GFLSLQDDPKLVHYMNVAKIQSDREYKKGYEASKT), 1624–1654 (KYHTPLDMVSVTAAKKSQEVATNANYRQSYH), 1655–1689 (HYTLLPDALNVEHSRNAMQIQSDNLYKSDFTNWMK), 1697–1725 (ESLEVEKAKKAGEILSEKKYRQHPEKLKF), 1730–1758 (DTMEQALNKSNKLNMDKRLYTEKWNKDKT), 1759–1793 (TIHVMPDTPDILLSRVNQITMSDKLYKAGWEEEKK), 1795–1829 (GYDLRPDAIAIKAARASRDIASDYKYKKAYEQAKG), 1833–1867 (GFRSLEDDPKLVHFMQVAKMQSDREYKKGYEKSKT), 1868–1894 (SFHTPVDMLSVVAAKKSQEVATNANYR), 1899–1933 (TYNMLPDAMSFELAKNMMQIQSDNQYKADYADFMK), 1949–1962 (KKAMEIISEKKYRQ), 1968–2002 (KYSTLMDSMNMVLAQNNAKIMNEHLYKQAWEADKT), 2003–2037 (KVHIMPDIPQIILAKANAINMSDKLYKLSLEESKK), 2039–2073 (GYDLRPDAIPIKAAKASRDIASDYKYKYNYEKGKG), 2077–2111 (GFRSLEDDPKLVHSMQVAKMQSDREYKKNYENTKT), 2112–2138 (SYHTPADMLSVTAAKDAQANITNTNYK), 2143–2177 (KYILLPDAMNIELTRNMNRIQSDNEYKQDYNEWYK), 2188–2206 (EVEKAKKATEYASDQKYRQ), 2212–2246 (QFKKLTDSMDMVLAKQNAHTMNKHLYTIDWNKDKT), 2247–2281 (KIHVMPDTPDILQAKQNQTLYSQKLYKLGWEEALK), 2283–2317 (GYDLPVDAISVQLAKASRDIASDYKYKQGYRKQLG), 2321–2355 (GFRSLQDDPKLVLSMNVAKMQSEREYKKDFEKWKT), 2356–2382 (KFSSPVDMLGVVLAKKCQELVSDVDYK), 2387–2421 (QWTCLPDQNDVVQAKKVYELQSENLYKSDLEWLRG), 2436–2449 (KRASEIISEKKYRQ), 2455–2489 (KFTSIPDAMDIVLAKTNAKNRSDRLYREAWDKDKT), 2490–2524 (QIHIMPDTPDIVLAKANLINTSDKLYRMGYEELKR), 2526–2560 (GYDLPVDAIPIKAAKASREIASEYKYKEGFRKQLG), 2564–2598 (GARNIEDDPKMMWSMHVAKIQSDREYKKDFEKWKT), 2599–2625 (KFSSPVDMLGVVLAKKCQTLVSDVDYK), 2630–2664 (QWTCLPDQSDVIHARQAYDLQSDNLYKSDLQWLKG), 2679–2692 (KRATQILSDHVYRQ), 2698–2732 (KFSSLMDSIPMVLAKNNAITMNHRLYTEAWDKDKT), 2733–2767 (TVHIMPDTPEVLLAKQNKVNYSEKLYKLGLEEAKR), 2769–2803 (GYDMRVDAIPIKAAKASRDIASEFKYKEGYRKQLG), 2807–2841 (GARAIRDDPKMMWSMHVAKIQSDREYKKDFEKWKT), 2842–2868 (KFSSPVDMLGVVLAKKCQTLVSDVDYK), 2873–2907 (QWTCLPDQSDVIHARQAYDLQSDNMYKSDLQWMRG), 2917–2935 (DVEKCKRATEILSDKIYRQ), 2941–2975 (KFTSVTDSLEQVLAKNNAITMNKRLYTEAWDKDKT), 2976–3010 (QIHIMPDTPEIMLARMNKINYSESLYKLANEEAKK), 3012–3046 (GYDLRSDAIPIVAAKASRDIISDYKYKDGYCKQLG), 3050–3084 (GARNIEDDPKMMWSMHVAKIQSDREYKKDFEKWKT), 3085–3111 (KFSSPVDMLGVVLAKKCQTLVSDVDYK), 3116–3150 (EWTCLPDQSDVIHARQAYDLQSDNIYKSDLQWLRG), 3158–3178 (SMDVVKCKRATEILSDNIYRQ), 3184–3218 (KFTSVTDSLEQVLAKNNALNMNKRLYTEAWDKDKT), 3219–3253 (QIHIMPDTPEIMLARQNKINYSETLYKLANEEAKK), 3255–3289 (GYDLRSDAIPIVAAKASRDVISDYKYKDGYRKQLG), 3293–3327 (GARNIEDDPKMMWSMHVAKIQSDREYKKDFEKWKT), 3328–3354 (KFSSPVDMLGVVLAKKCQTLVSDVDYK), 3359–3393 (EWTCLPDQNDVIHARQAYDLQSDNIYKSDLQWLRG), 3401–3421 (SMDVVKCKRAAEILSDNIYRQ), 3427–3461 (KFTSVTDSLEQVLAKNNALNMNKRLYTEAWDKDKT), 3462–3496 (QVHIMPDTPEIMLARQNKINYSESLYRQAMEEAKK), 3498–3532 (GYDLRSDAIPIVAAKASRDIASDYKYKEAYRKQLG), 3536–3570 (GARAVHDDPKIMWSLHIAKVQSDREYKKDFEKYKT), 3571–3597 (RYSSPVDMLGIVLAKKCQTLVSDVDYK), 3602–3636 (EWICLPDQNDIIHARKAYDLQSDNLYKSDLEWMKG), 3643–3664 (DSLEVVRAKRAGELLSDTIYRQ), 3670–3704 (KFTSITDTPEQVLAKNNALNMNKRLYTEAWDNDKK), 3705–3739 (TIHVMPDTPEIMLAKLNRINYSDKLYKLALEESKK), 3741–3775 (GYDLRLDAIPIQAAKASRDIASDYKYKEGYRKQLG), 3779–3813 (GARNIKDDPKMMWSIHVAKIQSDREYKKEFEKWKT), 3814–3840 (KFSSPVDMLGVVLAKKCQILVSDIDYK), 3845–3879 (EWTCLPDQNDVIQARKAYDLQSDAIYKSDLEWLRG), 3889–3907 (EVEKVKRAGEILSDRKYRQ), 3913–3947 (KFTCITDTPEIVLAKNNALTMSKHLYTEAWDADKT), 3948–3982 (SIHVMPDTPDILLAKSNSANISQKLYTKGWDESKM), 3984–4018 (DYDLRADAISIKSAKASRDIASDYKYKEAYEKQKG), 4022–4056 (GAQSIEDDPKIMCAIHAGKIQSEREYKKEFQKWKT), 4057–4083 (KFSSPVDMLSILLAKKCQTLVTDIDYR), 4088–4122 (EWTCMPDQNDIIQAKKAYDLQSDSVYKADLEWLRG), 4132–4149 (EMNRVKVAQDLVNERLYR), 4156–4190 (SFTSIVDTPEVVLAKANSLQISEKLYQEAWNKDKS), 4191–4225 (NITIPSDTPEMLQAHINALQISNKLYQKDWNDAKQ), 4227–4261 (GYDIRADAIEIKHAKASREIASEYKYKEGYRKQLG), 4265–4299 (GFRTLQDDPKSVWAIHAAKIQSDREYKKAYEKSKG), 4300–4326 (IHNTPLDMMSIVQAKKCQVLVSDIDYR), 4331–4365 (QWTCLPDQNDVIQAKKAYDLQSDNLYKSDLEWLKG), 4375–4392 (EVMRVKNAQNLLNERLYR), 4399–4433 (KFTSIVDTPEVIQAKINAVQISEPLYRDAWEKEKA), 4434–4468 (NVNVPADTPLMLQSKINALQISNKRYQQAWEDVKM), 4470–4504 (GYDLRADAIGIQHAKASRDIASDYLYKTAYEKQKG), 4508–4542 (GCRSAKEDPKLVWAANVLKMQNDRLYKKAYNDHKA), 4543–4569 (KISIPVDMVSISAAKEGQALASDVDYR), 4574–4608 (HWSCFPDQNDVIQARKAYDLQSDSVYKADLEWLRG), 4618–4635 (EMNRVKVAQDLVNERLYR), 4642–4676 (SFTSIVDTPEVVLAKANSLQISEKLYQEAWNKDKS), 4677–4711 (NITIPSDTPEMLQAHINALQISNKLYQKDWNDTKQ), 4713–4747 (GYDIRADAIEIKHAKASREIASEYKYKEGYRKQLG), 4751–4785 (GFRTLQDDPKSVWAIHAAKIQSDREYKKAYEKSKG), 4786–4812 (IHNTPLDMMSIVQAKKCQVLVSDIDYR), 4817–4851 (QWTCLPDQNDVIQAKKAYDLQSDNLYKSDLEWLKG), 4861–4878 (EVMRVKNAQNLLNERLYR), 4885–4919 (KFTSIVDTPEVIQAKINAVQISEPLYRNAWEKEKA), 4920–4954 (NVNVPADTPLMLQSKINALQISNKRYQQAWEDVKM), 4956–4990 (GYDLRADAIGIQHAKASRDIASDYLYKTAYEKQKG), 4994–5028 (GCRSAKEDPKLVWAANVLKMQNDRLYKKAYNDHKA), 5029–5055 (KISIPVDMVSISAAKEGQALASDVDYR), 5060–5094 (HWSCFPDQNDVIQARKAYDLQSDSVYKADLEWLRG), 5104–5121 (EMNRVKVAQDLVNERLYR), 5128–5162 (SFTSIVDTPEVVLAKANSLQISEKLYQEAWNKDKS), 5163–5197 (NITIPSDTPEMLQAHINALQISNKLYQKDWNDTKQ), 5199–5233 (GYDIRADAIEIKHAKASREIASEYKYKEGYRKQLG), 5237–5271 (GFRTLQDDPKSVWAIHAAKIQSDREYKKAYEKSKG), 5272–5298 (IHNTPLDMMSIVQAKKCQVLVSDIDYR), 5303–5337 (QWTCLPDQNDVIQAKKAYDLQSDNLYKSDLEWLKG), 5347–5364 (EVMRVKNAQNLLNERLYR), 5371–5405 (KFTSIVDTPEVIQAKINAVQISEPLYRDAWEKEKA), 5406–5440 (NVNVPADTPLMLQSKINALQISNKRYQQAWEDVKM), 5442–5476 (GYDLRADAIGIQHAKASRDIASDYLYKTAYEKQKG), 5480–5514 (GCRSAKEDPKLVWAANVLKMQNDRLYKKAYNDHKA), 5515–5541 (KISIPVDMVSISAAKEGQALASDVDYR), 5546–5580 (RWSCFPDQNDVIQARKAYDLQSDALYKADLEWLRG), 5588–5607 (SPEVLRVKNAQNIFCDSVYR), 5614–5648 (KYTSIVDTPEVVLAKSNAENISIPKYREVWDKDKT), 5649–5683 (SIHIMPDTPEINLARANALNVSNKLYREGWDEMKA), 5690–5718 (DAIPIQAAKASREIASDYKYKLDHEKQKG), 5722–5756 (GTLTARDDNKIRWALIADKLQNEREYRLDWAKWKA), 5757–5783 (KIQSPVDMLSILHSKNSQALVSDMDYR), 5788–5822 (QWTCMPDQNDVIQAKKAYELQSDNVYKADLEWLRG), 5829–5853 (DSVSVNHAKHAADIFSEKKYRTKIE), 5856–5890 (NFTPVDDRVDYVTAKQSGEILDDIKYRKDWNATKS), 5893–5924 (TLTETPLLHTAQEAARILDQYLYKEGWERQKA), 5926–5960 (GYILPPDAVPFVHAHHCNDVQSELKYKAEHVKQKG), 5964–5998 (GVPTMRDDPKLVWFEHAGQIQNERLYKEDYHKTKA), 5999–6025 (KINIPADMVSVLAAKQGQTLVSDIDYR), 6030–6064 (QWMCHPDQNDVIQARKAYDLQSDNVYRADLEWLRG), 6071–6099 (DSVDHVRVTKNQEMMSQIKYKKNALENYP), 6100–6134 (NFRSVVDPPEIVLAKINSVNQSDVKYKETFNKAKG), 6135–6169 (KYTFSPDTPHISHSKDMGKLYSTILYKGAWEGTKA), 6171–6205 (GYTLDERYIPIVGAKHADLVNSELKYKETYEKQKG), 6209–6243 (AGKVIGEFPGVVHCLDFQKMRSALNYRKHYEDTKA), 6244–6274 (NVHIPNDMMNHVLAKRCQYILSDLEYRHYFH), 6275–6309 (QWTSLLEEPNVIRVRNAQEILSDNVYKDDLNWLKG), 6316–6344 (DTPQILHAKKSYDLQSQLQYTAAGKENLQ), 6345–6379 (NYNLVTDTPLYVTAVQSGINASEVKYKENYHQIKD), 6380–6414 (KYTTVLETVDYDRTRNLKNLYSSNLYKEAWDRVKA), 6416–6450 (SYILPSSTLSLTHAKNQKHLASHIKYREEYEKFKA), 6458–6488 (VDDDPNTARCLRVGKLNIDRLYRSVYEKNKM), 6489–6515 (KIHIVPDMVEMVTAKDSQKKVSEIDYR), 6532–6554 (HVRKVTDQISDIVYKDDLNWLKG), 6561–6589 (DTPEILHAKHAYDLRDDIKYKAHMLKTRN), 6590–6624 (DYKLVTDTPVYVQAVKSGKQLSDAVYHYDYVHSVR), 6626–6660 (KVAPTTKTVDLDRALHAYKLQSSNLYKTSLRTLPT), 6661–6695 (GYRLPGDTPHFKHIKDTRYMSSYFKYKEAYEHTKA), 6697–6731 (GYTLGPKDVPFVHVRRVNNVTSERLYRELYHKLKD), 6732–6766 (KIHTTPDTPEIRQVKKTQEAVSELIYKSDFFKMQG), 6767–6801 (HMISLPYTPQVIHCRYVGDITSDIKYKEDLQVLKG), 6808–6836 (DTPDMVRSRHLRKLWSNYLYTDKARKMRD), 6837–6871 (KYKVVLDTPEYRKVQELKTHLSELVYRAAGKKQKS), 6872–6906 (IFTSVPDTPDLLRAKRGQKLQSQYLYVELATKERP), 6907–6941 (HHHAGNQTTALKHAKDVKDMVSEKKYKIQYEKMKD), 6942–6976 (KYTPVPDTPILIRAKRAYWNASDLRYKETFQKTKG), 6977–7011 (KYHTVKDALDIVYHRKVTDDISKIKYKENYMSQLG), 7012–7046 (IWRSIPDRPEHFHHRAVTDTVSDVKYKEDLTWLKG), 7053–7081 (DTPDFTLAEKNKTLYSKYKYKEVFERTKS), 7082–7110 (DFKYVADSPINRHFKYATQLMNERKYKSS), 7125–7151 (PDMLTALYNSHMWSQIKYRKNYEKSKD), 7152–7186 (KFTSIVDTPEHLRTTKVNKQISDILYKLEYNKAKP), 7188–7222 (GYTTIHDTPMLLHVRKVKDEVSDLKYKEVYQRNKS), 7223–7257 (NCTIEPDAVHIKAAKDAYKVNTNLDYKKQYEANKA), 7258–7292 (HWKWTPDRPDFLQAAKSSLQQSDFEYKLDREFLKG), 7297–7327 (VTDDKNTVLALRNTLIESDLKYKEKHVKERG), 7328–7362 (TCHAVPDTPQILLAKTVSNLVSENKYKDHVKKHLA), 7365–7399 (SYTTLPETRDTVHVKEVTKHVSDTNYKKKFVKEKG), 7402–7433 (NYSIMLEPPEVKHAMEVAKKQSDVAYRKDAKE), 7436–7470 (HYTTVADRPDIKKATQAAKQASEVEYRAKHRKEGS), 7479–7505 (PDIEMAKKAAKLSSQVKYRENFDKEKG), 7514–7542 (DSQLYKVMKDANNLASEVKYKADLKKLHK), 7543–7577 (PVTDMKESLIMNHVLNTSQLASSYQYKKKYEKSKG), 7578–7612 (HYHTIPDNLEQLHLKEATELQSIVKYKEKYEKERG), 7619–7647 (ETPTYITAKESQQMQSGKEYRKDYEESIK), 7650–7684 (NLTGLEVTPALLHVKYATKIASEKEYRKDLEESIR), 7687–7721 (GLTEMEDTPDMLRAKNATQILNEKEYKRDLELEVK), 7731–7759 (ETPDFMRARNATDIASQIKYKQSAEMEKA), 7760–7794 (NFTSVVDTPEIIHAQQVKNLSSQKKYKEDAEKSMS), 7795–7829 (YYETVLDTPEIQRVRENQKNFSLLQYQCDLKNSKG), 7830–7864 (KITVVQDTPEILRVKENQKNFSSVLYKEDVSPGTA), 7867–7888 (KTPEMMRVKQTQDHISSVKYKE), 7892–7921 (QGTPIPDLPEVKRVKETQKHISSVMYKENL), 7930–7957 (TPEIERVKRNQENFSSVLYKENLGKGIP), 7961–7988 (TPEMERVKRNQENFSSILYKENLSKGTP), 7992–8013 (TPEMERVKLNQENFSSVLYKEN), 8016–8045 (KGIPIPITPEMERVKHNQENFSSVLYKENL), 8054–8075 (TPEMQRVKHNQENLSSVLYKEN), 8078–8112 (KGTPLPVTPEMERVKHNQENISSVLYKENMGKGTP), 8116–8143 (TPEMERVKHNQENISSVLYKENMGKGTP), 8147–8168 (TPEMERVKHNQENISSVLYKEN), 8171–8205 (KATATPVTPEMQRVKRNQENISSVLYKENLGKATP), 8209–8232 (TPEMERVKRNQENFSSVLYKENMR), 8233–8267 (KATPTPVTPEMERAKRNQENISSVLYSDSFRKQIQ), 8269–8303 (KAAYVLDTPEMRRVRETQRHISTVKYHEDFEKHKG), and 8304–8330 (CFTPVVTDPITERVKKNMQDFSDINYR). The tract at residues 8313 to 8468 (ITERVKKNMQ…SIPSHPSTAG (156 aa)) is interaction with SVIL. Disordered stretches follow at residues 8385–8422 (QAQRRSREQSRSASALSISGGEEKSEHSEAPDHHLSTY) and 8439–8463 (TTELPQQRSSSVATQQTTVSSIPSH). Residues 8405–8419 (GEEKSEHSEAPDHHL) show a composition bias toward basic and acidic residues. The span at 8444–8459 (QQRSSSVATQQTTVSS) shows a compositional bias: low complexity. The SH3 domain occupies 8466–8525 (TAGKIFRAMYDYMAADADEVSFKDGDAIINVQAIDEGWMYGTVQRTGRTGMLPANYVEAI).

In terms of assembly, monomer and homooligomer. Interacts with TTN/titin. Interacts with SVIL. Interacts (via nebulin repeats 160-164) with DES. Expressed in skeletal muscle (at protein level). Located in the thin filament of striated muscle.

Its subcellular location is the cytoplasm. It is found in the myofibril. The protein localises to the sarcomere. It localises to the cytoskeleton. Functionally, this giant muscle protein may be involved in maintaining the structural integrity of sarcomeres and the membrane system associated with the myofibrils. Binds and stabilize F-actin. This chain is Nebulin (NEB), found in Homo sapiens (Human).